A 328-amino-acid polypeptide reads, in one-letter code: Helicase VP6-A (328 aa).

Disordered regions lie at residues 31–128 and 180–237; these read DWTE…TGAN and VAEQ…SVGI. Composition is skewed to basic and acidic residues over residues 36–61, 71–83, and 96–109; these read ETNK…EGRN, AKET…DRRI, and PGER…RGDG. Residue Lys-110 coordinates ATP. Residues 110-128 are compositionally biased toward gly residues; that stretch reads KVGGGGGDADAGVGTTGAN. Basic and acidic residues-rich tracts occupy residues 180 to 205 and 214 to 230; these read VAEQ…AAER and PHGD…KTSE.

It belongs to the orbivirus VP6 family. As to quaternary structure, homohexamer.

It is found in the virion. The enzyme catalyses ATP + H2O = ADP + phosphate + H(+). In terms of biological role, ATP dependent RNA helicase essential for RNA packaging and viral transcription. Possesses ss- and dsRNA-binding capacity. In Bluetongue virus 1 (isolate South Africa) (BTV 1), this protein is Helicase VP6-A (Segment-9).